Here is a 211-residue protein sequence, read N- to C-terminus: Uridine kinase (211 aa).

12–19 contacts ATP; sequence GGTGSGKT.

The protein belongs to the uridine kinase family.

The protein localises to the cytoplasm. It carries out the reaction uridine + ATP = UMP + ADP + H(+). The enzyme catalyses cytidine + ATP = CMP + ADP + H(+). The protein operates within pyrimidine metabolism; CTP biosynthesis via salvage pathway; CTP from cytidine: step 1/3. It functions in the pathway pyrimidine metabolism; UMP biosynthesis via salvage pathway; UMP from uridine: step 1/1. The polypeptide is Uridine kinase (Halalkalibacterium halodurans (strain ATCC BAA-125 / DSM 18197 / FERM 7344 / JCM 9153 / C-125) (Bacillus halodurans)).